Reading from the N-terminus, the 398-residue chain is Probable L-tyrosine/L-aspartate decarboxylase (398 aa).

The residue at position 242 (lysine 242) is an N6-(pyridoxal phosphate)lysine.

Belongs to the group II decarboxylase family. MfnA subfamily. The cofactor is pyridoxal 5'-phosphate.

It catalyses the reaction L-tyrosine + H(+) = tyramine + CO2. The enzyme catalyses L-aspartate + H(+) = beta-alanine + CO2. Its pathway is cofactor biosynthesis; methanofuran biosynthesis. It functions in the pathway cofactor biosynthesis; coenzyme A biosynthesis. Functionally, catalyzes the decarboxylation of L-tyrosine to produce tyramine for methanofuran biosynthesis. Can also catalyze the decarboxylation of L-aspartate to produce beta-alanine for coenzyme A (CoA) biosynthesis. The sequence is that of Probable L-tyrosine/L-aspartate decarboxylase from Methanosarcina mazei (strain ATCC BAA-159 / DSM 3647 / Goe1 / Go1 / JCM 11833 / OCM 88) (Methanosarcina frisia).